The following is a 416-amino-acid chain: Enterobactin exporter EntS (416 aa).

At 1–21 the chain is on the cytoplasmic side; that stretch reads MNKQSWLLNLSLLKTHPAFRA. A helical membrane pass occupies residues 22-42; that stretch reads VFLARFISIVSLGLLGVAVPV. At 43-55 the chain is on the periplasmic side; the sequence is QIQIMTHSTWQVG. Residues 56-76 traverse the membrane as a helical segment; sequence LSVTLTGGAMFVGLMVGGVLA. At 77–83 the chain is on the cytoplasmic side; it reads DRYERKK. The helical transmembrane segment at 84-104 threads the bilayer; sequence VILLARGTCGIGFIGLCLNAL. The Periplasmic portion of the chain corresponds to 105 to 109; the sequence is LPEPS. A helical transmembrane segment spans residues 110–130; it reads LLAIYLLGLWDGFFASLGVTA. Residues 131–156 are Cytoplasmic-facing; the sequence is LLAATPALVGRENLMQAGAITMLTVR. A helical membrane pass occupies residues 157–177; the sequence is LGSVISPMIGGLLLATGGVAW. Residue asparagine 178 is a topological domain, periplasmic. The helical transmembrane segment at 179–199 threads the bilayer; the sequence is YGLAAAGTFITLLPLLSLPAL. Residues 200–218 lie on the Cytoplasmic side of the membrane; that stretch reads PPPPQPREHPLKSLLAGFR. Residues 219 to 239 form a helical membrane-spanning segment; it reads FLLASPLVGGIALLGGLLTMA. Topologically, residues 240–256 are periplasmic; that stretch reads SAVRVLYPALADNWQMS. The helical transmembrane segment at 257-277 threads the bilayer; the sequence is AAQIGFLYAAIPLGAAIGALT. Residues 278–287 are Cytoplasmic-facing; the sequence is SGKLAHSVRP. Residues 288–307 form a helical membrane-spanning segment; that stretch reads GLLMLLSTLGAFLAIGLFGL. The Periplasmic segment spans residues 308 to 313; sequence MPMWIL. A helical transmembrane segment spans residues 314-336; sequence GVVCLALFGWLSAVSSLLQYTML. At 337-356 the chain is on the cytoplasmic side; sequence QTQTPEAMLGRINGLWTAQN. Residues 357–377 traverse the membrane as a helical segment; that stretch reads VTGDAIGAALLGGLGAMMTPV. Position 378 (alanine 378) is a topological domain, periplasmic. A helical transmembrane segment spans residues 379–399; sequence SASASGFGLLIIGVLLLLVLV. Residues 400 to 416 lie on the Cytoplasmic side of the membrane; that stretch reads ELRRFRQTPPQVTASDS.

Belongs to the major facilitator superfamily. EntS (TC 2.A.1.38) family.

The protein localises to the cell inner membrane. Its function is as follows. Component of an export pathway for enterobactin. This Escherichia coli O127:H6 (strain E2348/69 / EPEC) protein is Enterobactin exporter EntS.